The following is a 233-amino-acid chain: Pirin-like protein YhaK (233 aa).

This sequence belongs to the pirin family. In terms of assembly, monomer.

The protein resides in the cytoplasm. Functionally, does not have quercetin 2,3-dioxygenase activity. The protein is Pirin-like protein YhaK (yhaK) of Escherichia coli (strain K12).